The sequence spans 744 residues: Prestin (744 aa).

The Cytoplasmic portion of the chain corresponds to 1–75 (MDHAEENEIP…PITKWLPAYK (75 aa)). A helical transmembrane segment spans residues 76–105 (FKEYVLGDLVSGISTGVLQLPQGLAFAMLA). Topologically, residues 106-108 (AVP) are extracellular. The helical transmembrane segment at 109 to 126 (PVFGLYSSFYPVIMYCFF) threads the bilayer. The Cytoplasmic segment spans residues 127-137 (GTSRHISIGPF). Residues 138 to 151 (AVISLMIGGVAVRL) form a helical membrane-spanning segment. The Extracellular portion of the chain corresponds to 152–168 (VPDDIVIPGGVNATNGT). The short motif at 158 to 168 (IPGGVNATNGT) is the Involved in motor function element. N-linked (GlcNAc...) asparagine glycans are attached at residues Asn163 and Asn166. The chain crosses the membrane as a helical span at residues 169 to 196 (EARDALRVKVAMSVTLLSGIIQFCLGVC). The Cytoplasmic segment spans residues 197–206 (RFGFVAIYLT). A helical membrane pass occupies residues 207 to 230 (EPLVRGFTTAAAVHVFTSMLKYLF). Residues 231-241 (GVKTKRYSGIF) are Extracellular-facing. An intramembrane region (helical) is located at residues 242 to 253 (SVVYSTVAVLQN). The Extracellular segment spans residues 254–258 (VKNLN). A helical membrane pass occupies residues 259-282 (VCSLGVGLMVFGLLLGGKEFNERF). Over 283–291 (KEKLPAPIP) the chain is Cytoplasmic. Residues 292–307 (LEFFAVVMGTGISAGF) form a helical membrane-spanning segment. Over 308–332 (NLHESYSVDVVGTLPLGLLPPANPD) the chain is Extracellular. A helical transmembrane segment spans residues 333–367 (TSLFHLVYVDAIAIAIVGFSVTISMAKTLANKHGY). Residues 368–370 (QVD) are Cytoplasmic-facing. A helical membrane pass occupies residues 371-388 (GNQELIALGICNSIGSLF). Residues 389-396 (QTFSISCS) are Extracellular-facing. A helical transmembrane segment spans residues 397 to 406 (LSRSLVQEGT). A salicylate-binding site is contributed by Ser398. At 407-410 (GGKT) the chain is on the cytoplasmic side. Residues 411–432 (QLAGCLASLMILLVILATGFLF) form a helical membrane-spanning segment. The Extracellular portion of the chain corresponds to 433 to 436 (ESLP). Residues 437-464 (QAVLSAIVIVNLKGMFMQFSDLPFFWRT) traverse the membrane as a helical segment. A topological domain (cytoplasmic) is located at residue Ser465. The chain crosses the membrane as a helical span at residues 466 to 481 (KIELTIWLTTFVSSLF). Residues 482-483 (LG) are Extracellular-facing. A helical membrane pass occupies residues 484–504 (LDYGLITAVIIALLTVIYRTQ). Residues 505-718 (SPSYKVLGQL…AVLGSQVREA (214 aa)) are extended region for STAS domain. The Cytoplasmic segment spans residues 505 to 744 (SPSYKVLGQL…PNATPTTPEA (240 aa)). One can recognise an STAS domain in the interval 525 to 713 (AYEEVKEIPG…HSIHDAVLGS (189 aa)). The disordered stretch occupies residues 720–744 (AEQEATASLPQEDMEPNATPTTPEA).

Belongs to the SLC26A/SulP transporter (TC 2.A.53) family. Homodimer. Interacts (via STAS domain) with CALM; this interaction is calcium-dependent and the STAS domain interacts with only one lobe of CALM which is an elongated conformation. Interacts with MYH1. Expressed in the outer hair cells (OHC) of the organ of Corti of the inner ear. Also weak expression in brain and testis. Very weakly expressed in heart, spleen, muscle and lactating mammary glands. Expressed in cardiac myocytes (at protein level), both in the surface sarcolemma and along the t-tubule. Weakly expressed in skeletal muscle cells (at protein level).

The protein resides in the lateral cell membrane. It catalyses the reaction 2 hydrogencarbonate(in) + chloride(out) = 2 hydrogencarbonate(out) + chloride(in). In terms of biological role, voltage-sensitive motor protein that drives outer hair cell (OHC) electromotility (eM) and participates in sound amplification in the hearing organ. Converts changes in the transmembrane electric potential into mechanical displacements resulting in the coupling of its expansion to movement of a charged voltage sensor across the lipid membrane. The nature of the voltage sensor is not completely clear, and two models compete. In the first model, acts as an incomplete transporter where intracellular chloride anion acts as extrinsic voltage sensor that drives conformational change in the protein which is sufficient to produce a length change in the plane of the membrane and hence in the length of the OHC. The second model in which multiple charged amino acid residues are distributed at the intracellular and extracellular membrane interfaces that form an intrinsic voltage sensor, whose movement produces the non-linear capacitance (NLC). However, the effective voltage sensor may be the result of a hybrid voltage sensor, assembled from intrinsic charge (charged residues) and extrinsic charge (bound anion). Notably, binding of anions to the anion-binding pocket partially neutralizes the intrinsic positive charge rather than to form an electrically negative sensor, therefore remaining charge may serve as voltage sensor that, after depolarization, moves from down (expanded state) to up (contracted) conformation, which is accompanied by an eccentric contraction of the intermembrane cross-sectional area of the protein as well as a major increase in the hydrophobic thickness of the protein having as consequences the plasma membrane thickening and the cell contraction after membrane depolarization. The anion-binding pocket transits from the inward-open (Down) state, where it is exposed toward the intracellular solvent in the absence of anion, to the occluded (Up) state upon anion binding. Salicylate competes for the anion-binding site and inhibits the voltage-sensor movement, and therefore inhibits the charge transfer and electromotility by displacing Cl(-) from the anion-binding site and by preventing the structural transitions to the contracted state. In addition, can act as a weak Cl(-)/HCO3(-) antiporter across the cell membrane and so regulate the intracellular pH of the outer hair cells (OHCs), while firstly found as being unable to mediate electrogenic anion transport. Moreover, supports a role in cardiac mechanical amplification serving as an elastic element to enhance the actomyosin- based sarcomere contraction system. The protein is Prestin of Mus musculus (Mouse).